The chain runs to 358 residues: Type II methyltransferase M.HpaII (358 aa).

An SAM-dependent MTase C5-type domain is found at 32–356; sequence FTFIDLFAGI…KKILEKLGNL (325 aa). C103 is a catalytic residue.

The protein belongs to the class I-like SAM-binding methyltransferase superfamily. C5-methyltransferase family. In terms of assembly, monomer.

It carries out the reaction a 2'-deoxycytidine in DNA + S-adenosyl-L-methionine = a 5-methyl-2'-deoxycytidine in DNA + S-adenosyl-L-homocysteine + H(+). Functionally, a methylase that recognizes the double-stranded sequence 5'-CCGG-3', methylates C-2 on both strands, and protects the DNA from cleavage by the HpaII endonuclease. This is Type II methyltransferase M.HpaII from Haemophilus parainfluenzae.